A 146-amino-acid chain; its full sequence is Nitric oxide reductase subunit C (146 aa).

The chain crosses the membrane as a helical; Signal-anchor span at residues 13 to 29 (IYFGGSVFFILLFLALT). Heme c contacts are provided by Cys-61, Cys-64, and His-65.

As to quaternary structure, heterodimer of cytochromes b (large subunit) and c (small subunit).

The protein localises to the cell membrane. Its function is as follows. Component of the anaerobic respiratory chain that transforms nitrate to dinitrogen (denitrification). The chain is Nitric oxide reductase subunit C (norC) from Pseudomonas aeruginosa (strain ATCC 15692 / DSM 22644 / CIP 104116 / JCM 14847 / LMG 12228 / 1C / PRS 101 / PAO1).